Consider the following 266-residue polypeptide: 4-hydroxy-tetrahydrodipicolinate reductase (266 aa).

10–15 (GPRGRM) contacts NAD(+). Lys38 lines the NADP(+) pocket. NAD(+) contacts are provided by residues 99–101 (GTT) and 125–128 (APNF). His155 serves as the catalytic Proton donor/acceptor. Position 156 (His156) interacts with (S)-2,3,4,5-tetrahydrodipicolinate. Lys159 (proton donor) is an active-site residue. (S)-2,3,4,5-tetrahydrodipicolinate is bound at residue 165 to 166 (GT).

This sequence belongs to the DapB family.

The protein resides in the cytoplasm. The catalysed reaction is (S)-2,3,4,5-tetrahydrodipicolinate + NAD(+) + H2O = (2S,4S)-4-hydroxy-2,3,4,5-tetrahydrodipicolinate + NADH + H(+). The enzyme catalyses (S)-2,3,4,5-tetrahydrodipicolinate + NADP(+) + H2O = (2S,4S)-4-hydroxy-2,3,4,5-tetrahydrodipicolinate + NADPH + H(+). The protein operates within amino-acid biosynthesis; L-lysine biosynthesis via DAP pathway; (S)-tetrahydrodipicolinate from L-aspartate: step 4/4. Catalyzes the conversion of 4-hydroxy-tetrahydrodipicolinate (HTPA) to tetrahydrodipicolinate. The chain is 4-hydroxy-tetrahydrodipicolinate reductase from Bacillus cereus (strain ATCC 14579 / DSM 31 / CCUG 7414 / JCM 2152 / NBRC 15305 / NCIMB 9373 / NCTC 2599 / NRRL B-3711).